The primary structure comprises 24 residues: Iron-regulated 31 kDa protein (24 aa).

Its subcellular location is the periplasm. May be involved in iron uptake. The sequence is that of Iron-regulated 31 kDa protein from Haemophilus influenzae.